The sequence spans 1188 residues: DNA-directed RNA polymerase subunit beta (1188 aa).

It belongs to the RNA polymerase beta chain family. The RNAP catalytic core consists of 2 alpha, 1 beta, 1 beta' and 1 omega subunit. When a sigma factor is associated with the core the holoenzyme is formed, which can initiate transcription.

It carries out the reaction RNA(n) + a ribonucleoside 5'-triphosphate = RNA(n+1) + diphosphate. Its function is as follows. DNA-dependent RNA polymerase catalyzes the transcription of DNA into RNA using the four ribonucleoside triphosphates as substrates. The chain is DNA-directed RNA polymerase subunit beta from Streptococcus equi subsp. zooepidemicus (strain H70).